The chain runs to 97 residues: Small integral membrane protein 8 (97 aa).

The interval 1-24 is disordered; that stretch reads MSSAPEPPTFKKEPPKEKEFQSPG. A compositionally biased stretch (basic and acidic residues) spans 9 to 20; that stretch reads TFKKEPPKEKEF. A helical transmembrane segment spans residues 48 to 70; sequence PVMAFGLVTLSLCVAYIGYLHAI.

The protein belongs to the SMIM8 family.

The protein resides in the membrane. In Homo sapiens (Human), this protein is Small integral membrane protein 8 (SMIM8).